The primary structure comprises 374 residues: DNA integrity scanning protein DisA (374 aa).

Positions 20-158 constitute a DAC domain; the sequence is DGLMRASLSA…DGQRRVLEDS (139 aa). Residues glycine 87, leucine 105, and 118–122 contribute to the ATP site; that span reads TRHRT.

The protein belongs to the DisA family. As to quaternary structure, homooctamer. Interacts with RadA. Mg(2+) serves as cofactor.

The enzyme catalyses 2 ATP = 3',3'-c-di-AMP + 2 diphosphate. Its activity is regulated as follows. Diadenylate cyclase activity is inhibited by the interaction with RadA. Its function is as follows. Participates in a DNA-damage check-point that is active prior to asymmetric division when DNA is damaged. DisA forms globular foci that rapidly scan along the chromosomes during sporulation, searching for lesions. When a lesion is present, DisA pauses at the lesion site. This triggers a cellular response that culminates in a temporary block in sporulation initiation. In terms of biological role, also has diadenylate cyclase activity, catalyzing the condensation of 2 ATP molecules into cyclic di-AMP (c-di-AMP). c-di-AMP acts as a signaling molecule that couples DNA integrity with progression of sporulation. The rise in c-di-AMP level generated by DisA while scanning the chromosome, operates as a positive signal that advances sporulation; upon encountering a lesion, the DisA focus arrests at the damaged site and halts c-di-AMP synthesis. This chain is DNA integrity scanning protein DisA, found in Streptomyces coelicolor (strain ATCC BAA-471 / A3(2) / M145).